The chain runs to 165 residues: Sporulation-specific cell division protein SsgB (165 aa).

A disordered region spans residues 1 to 21 (MLVGNSWTRSLEPVSGHEHTE).

The protein belongs to the SsgA family. In terms of assembly, interacts with SsgA. Interacts with FtsZ (via N-terminus).

The protein localises to the cell septum. In terms of biological role, involved in sporulation-specific cell division. Required for early stages of sporulation. Important in the process of growth cessation prior to sporulation-specific cell division. Recruits cell division protein FtsZ to the future septum sites and tethers the contractile ring structure (Z ring) to the cytoplasmic membrane during sporulation. Stimulates polymerization and filament length of FtsZ in vitro. The protein is Sporulation-specific cell division protein SsgB of Kineococcus radiotolerans (strain ATCC BAA-149 / DSM 14245 / SRS30216).